The primary structure comprises 69 residues: Cold shock-like protein CspC (69 aa).

The 61-residue stretch at 6–66 (GQVKWFNESK…GQKGPAAVNV (61 aa)) folds into the CSD domain.

Its subcellular location is the cytoplasm. The sequence is that of Cold shock-like protein CspC (cspC) from Escherichia coli O157:H7.